A 277-amino-acid polypeptide reads, in one-letter code: Large ribosomal subunit protein uL2 (277 aa).

Residues 199–277 are disordered; that stretch reads DHGNINDGKA…ILRSRHQRKS (79 aa).

This sequence belongs to the universal ribosomal protein uL2 family. As to quaternary structure, part of the 50S ribosomal subunit. Forms a bridge to the 30S subunit in the 70S ribosome.

In terms of biological role, one of the primary rRNA binding proteins. Required for association of the 30S and 50S subunits to form the 70S ribosome, for tRNA binding and peptide bond formation. It has been suggested to have peptidyltransferase activity; this is somewhat controversial. Makes several contacts with the 16S rRNA in the 70S ribosome. This chain is Large ribosomal subunit protein uL2, found in Mesorhizobium japonicum (strain LMG 29417 / CECT 9101 / MAFF 303099) (Mesorhizobium loti (strain MAFF 303099)).